The chain runs to 417 residues: Tol-Pal system protein TolB (417 aa).

An N-terminal signal peptide occupies residues 1-16; sequence MRYLWLFLIHTIGLFA.

The protein belongs to the TolB family. The Tol-Pal system is composed of five core proteins: the inner membrane proteins TolA, TolQ and TolR, the periplasmic protein TolB and the outer membrane protein Pal. They form a network linking the inner and outer membranes and the peptidoglycan layer.

The protein resides in the periplasm. Functionally, part of the Tol-Pal system, which plays a role in outer membrane invagination during cell division and is important for maintaining outer membrane integrity. In Helicobacter pylori (strain ATCC 700392 / 26695) (Campylobacter pylori), this protein is Tol-Pal system protein TolB.